We begin with the raw amino-acid sequence, 547 residues long: GMP synthase [glutamine-hydrolyzing] (547 aa).

The 199-residue stretch at lysine 12 to aspartate 210 folds into the Glutamine amidotransferase type-1 domain. Cysteine 89 serves as the catalytic Nucleophile. Residues histidine 184 and glutamate 186 contribute to the active site. A GMPS ATP-PPase domain is found at tryptophan 211–arginine 403. Serine 238–serine 244 is a binding site for ATP.

Homodimer.

The catalysed reaction is XMP + L-glutamine + ATP + H2O = GMP + L-glutamate + AMP + diphosphate + 2 H(+). Its pathway is purine metabolism; GMP biosynthesis; GMP from XMP (L-Gln route): step 1/1. Its function is as follows. Catalyzes the synthesis of GMP from XMP. This is GMP synthase [glutamine-hydrolyzing] from Ralstonia nicotianae (strain ATCC BAA-1114 / GMI1000) (Ralstonia solanacearum).